A 217-amino-acid polypeptide reads, in one-letter code: 3,4-dihydroxy-2-butanone 4-phosphate synthase (217 aa).

D-ribulose 5-phosphate-binding positions include 37-38 (RE), aspartate 42, 150-154 (RRGHT), and glutamate 174. Glutamate 38 is a Mg(2+) binding site. Histidine 153 provides a ligand contact to Mg(2+).

This sequence belongs to the DHBP synthase family. Homodimer. Mg(2+) is required as a cofactor. It depends on Mn(2+) as a cofactor.

It carries out the reaction D-ribulose 5-phosphate = (2S)-2-hydroxy-3-oxobutyl phosphate + formate + H(+). It participates in cofactor biosynthesis; riboflavin biosynthesis; 2-hydroxy-3-oxobutyl phosphate from D-ribulose 5-phosphate: step 1/1. Functionally, catalyzes the conversion of D-ribulose 5-phosphate to formate and 3,4-dihydroxy-2-butanone 4-phosphate. The chain is 3,4-dihydroxy-2-butanone 4-phosphate synthase from Desulforapulum autotrophicum (strain ATCC 43914 / DSM 3382 / VKM B-1955 / HRM2) (Desulfobacterium autotrophicum).